Here is a 540-residue protein sequence, read N- to C-terminus: Chaperonin GroEL (540 aa).

ATP-binding positions include 29–32 (TLGP), 86–90 (DGTTT), G413, 477–479 (DAL), and D493.

The protein belongs to the chaperonin (HSP60) family. In terms of assembly, forms a cylinder of 14 subunits composed of two heptameric rings stacked back-to-back. Interacts with the co-chaperonin GroES.

It is found in the cytoplasm. The enzyme catalyses ATP + H2O + a folded polypeptide = ADP + phosphate + an unfolded polypeptide.. Together with its co-chaperonin GroES, plays an essential role in assisting protein folding. The GroEL-GroES system forms a nano-cage that allows encapsulation of the non-native substrate proteins and provides a physical environment optimized to promote and accelerate protein folding. The sequence is that of Chaperonin GroEL from Clostridium botulinum (strain Eklund 17B / Type B).